A 728-amino-acid polypeptide reads, in one-letter code: MSDRIDRDVINALIAGHFADPFSVLGMHKTTAGLEVRALLPDATDVWVIEPKTGRKLAKLECLDSRGFFSGVIPRRKNFFRYQLAVVWHGQQNLIDDPYRFGPLIQEMDAWLLSEGTHLRPYETLGAHADTMDGVTGTRFSVWAPNARRVSVVGQFNYWDGRRHPMRLRKESGIWELFIPGAHNGQLYKYEMIDANGNLRLKSDPYAFEAQMRPETASLICGLPEKVVQTEERKKANQFDAPISIYEVHLGSWRRHTDNNFWLSYRELADQLVPYAKWMGFTHLELLPLNEHPFDGSWGYQPTGLYAPTRRFGTRDDFRYFIDAAHAAGLNVILDWVPGHFPTDDFALAEFDGTNLYEHSDPREGYHQDWNTLIYNYGRREVSNFLVGNALYWIERFGIDALRVDAVASMIYRDYSRKEGEWIPNEFGGRENLEAIEFLRNTNRILGEQVSGAVTMAEESTDFPGVSRPQDMGGLGFWYKWNLGWMHDTLDYMKLDPIYRQYHHDKLTFGMLYNYTENFVLPLSHDEVVHGKKSILDRMPGDAWQKFANLRAYYGWMWAFPGKKLLFMGNEFAQGREWNHDASLDWHLLEGGDNWHHGVQRLVRDLNLTYRHHKAMHELDFDPYGFEWLVVDDKERSVLIFVRRDKEGNEIIVASNFTPVPRHDYRFGINQPGKWREILNTDSMHYHGSNAGNGGTVHSDEIASHGRQHSLSLTLPPLATIWLVREAE.

Catalysis depends on Asp405, which acts as the Nucleophile. Catalysis depends on Glu458, which acts as the Proton donor.

Belongs to the glycosyl hydrolase 13 family. GlgB subfamily. Monomer.

The enzyme catalyses Transfers a segment of a (1-&gt;4)-alpha-D-glucan chain to a primary hydroxy group in a similar glucan chain.. The protein operates within glycan biosynthesis; glycogen biosynthesis. Functionally, catalyzes the formation of the alpha-1,6-glucosidic linkages in glycogen by scission of a 1,4-alpha-linked oligosaccharide from growing alpha-1,4-glucan chains and the subsequent attachment of the oligosaccharide to the alpha-1,6 position. This is 1,4-alpha-glucan branching enzyme GlgB from Escherichia coli O157:H7.